The sequence spans 122 residues: Large ribosomal subunit protein uL14c (122 aa).

It belongs to the universal ribosomal protein uL14 family. As to quaternary structure, part of the 50S ribosomal subunit.

The protein resides in the plastid. Functionally, binds to 23S rRNA. The protein is Large ribosomal subunit protein uL14c of Euglena longa (Euglenophycean alga).